The chain runs to 165 residues: Bacterial non-heme ferritin (165 aa).

Residues 1 to 145 (MLKPEMIEKL…SIIDKLSLAG (145 aa)) enclose the Ferritin-like diiron domain. Fe cation contacts are provided by glutamate 17, glutamate 49, glutamate 50, histidine 53, glutamate 94, glutamate 126, glutamine 127, and glutamate 130.

This sequence belongs to the ferritin family. Prokaryotic subfamily. Homooligomer of 24 subunits that assemble into a spherical protein shell (12 +/- 1 nM diameter) that can sequester at least 2000 iron atoms.

Its subcellular location is the cytoplasm. The enzyme catalyses 4 Fe(2+) + O2 + 6 H2O = 4 iron(III) oxide-hydroxide + 12 H(+). In terms of biological role, iron-storage protein. This Escherichia coli O157:H7 protein is Bacterial non-heme ferritin (ftnA).